Reading from the N-terminus, the 435-residue chain is 3-phosphoshikimate 1-carboxyvinyltransferase (435 aa).

Residues K21, S22, and R26 each contribute to the 3-phosphoshikimate site. K21 contacts phosphoenolpyruvate. The phosphoenolpyruvate site is built by G98 and R126. The 3-phosphoshikimate site is built by S169, S170, Q171, S197, D312, and K339. A phosphoenolpyruvate-binding site is contributed by Q171. The active-site Proton acceptor is D312. Residues R343, R386, and K412 each contribute to the phosphoenolpyruvate site.

This sequence belongs to the EPSP synthase family. As to quaternary structure, monomer.

It localises to the cytoplasm. It catalyses the reaction 3-phosphoshikimate + phosphoenolpyruvate = 5-O-(1-carboxyvinyl)-3-phosphoshikimate + phosphate. Its pathway is metabolic intermediate biosynthesis; chorismate biosynthesis; chorismate from D-erythrose 4-phosphate and phosphoenolpyruvate: step 6/7. Catalyzes the transfer of the enolpyruvyl moiety of phosphoenolpyruvate (PEP) to the 5-hydroxyl of shikimate-3-phosphate (S3P) to produce enolpyruvyl shikimate-3-phosphate and inorganic phosphate. This Clostridium beijerinckii (strain ATCC 51743 / NCIMB 8052) (Clostridium acetobutylicum) protein is 3-phosphoshikimate 1-carboxyvinyltransferase.